The primary structure comprises 604 residues: uncharacterized protein (604 aa).

Residues 45–329 (LPLSFLTVLI…LGQVYNQLLM (285 aa)) form the ABC transmembrane type-1 domain. 6 helical membrane passes run 49–69 (FLTVLIGTAVKLVIPILIGVY), 82–102 (LLIQLIFIISGLYVLNYAANV), 162–182 (VINLLTDLLLLAGVIIILFTL), 184–204 (PELTIAIMVTLPIMFFISTSL), 273–293 (LVEMTNAIGTAVLIWYGATLI), and 297–317 (TITIGVFVSFAFYLGMFWEPI). Positions 363-597 (ISFEEVEFSY…GGIYAGLVKA (235 aa)) constitute an ABC transporter domain. 396–403 (GHTGSGKT) is a binding site for ATP.

The protein belongs to the ABC transporter superfamily.

It localises to the cell membrane. This is an uncharacterized protein from Bacillus subtilis (strain 168).